The following is a 404-amino-acid chain: Cysteine desulfurase IscS (404 aa).

Pyridoxal 5'-phosphate is bound by residues 75–76 (AT), N155, Q183, and 203–205 (SAH). An N6-(pyridoxal phosphate)lysine modification is found at K206. Residue T243 participates in pyridoxal 5'-phosphate binding. The active-site Cysteine persulfide intermediate is C328. C328 is a binding site for [2Fe-2S] cluster.

The protein belongs to the class-V pyridoxal-phosphate-dependent aminotransferase family. NifS/IscS subfamily. In terms of assembly, homodimer. Forms a heterotetramer with IscU, interacts with other sulfur acceptors. Pyridoxal 5'-phosphate serves as cofactor.

The protein localises to the cytoplasm. The catalysed reaction is (sulfur carrier)-H + L-cysteine = (sulfur carrier)-SH + L-alanine. It participates in cofactor biosynthesis; iron-sulfur cluster biosynthesis. In terms of biological role, master enzyme that delivers sulfur to a number of partners involved in Fe-S cluster assembly, tRNA modification or cofactor biosynthesis. Catalyzes the removal of elemental sulfur atoms from cysteine to produce alanine. Functions as a sulfur delivery protein for Fe-S cluster synthesis onto IscU, an Fe-S scaffold assembly protein, as well as other S acceptor proteins. The sequence is that of Cysteine desulfurase IscS from Shewanella piezotolerans (strain WP3 / JCM 13877).